Reading from the N-terminus, the 565-residue chain is Probable peptidoglycan D,D-transpeptidase PbpC (565 aa).

Residues 10–30 form a helical membrane-spanning segment; it reads FILVVTLFVLASLAVSGRLVY. Catalysis depends on Ser289, which acts as the Acyl-ester intermediate.

This sequence belongs to the transpeptidase family. FtsI subfamily.

It is found in the cell inner membrane. The catalysed reaction is Preferential cleavage: (Ac)2-L-Lys-D-Ala-|-D-Ala. Also transpeptidation of peptidyl-alanyl moieties that are N-acyl substituents of D-alanine.. It participates in cell wall biogenesis; peptidoglycan biosynthesis. Functionally, catalyzes cross-linking of the peptidoglycan cell wall at the division septum. Binds penicillin. This chain is Probable peptidoglycan D,D-transpeptidase PbpC, found in Pseudomonas aeruginosa (strain ATCC 15692 / DSM 22644 / CIP 104116 / JCM 14847 / LMG 12228 / 1C / PRS 101 / PAO1).